Here is a 1023-residue protein sequence, read N- to C-terminus: RTX-I toxin determinant A from serotypes 5/10 (1023 aa).

The next 3 membrane-spanning stretches (helical) occupy residues 226–256, 297–326, and 367–406; these read NNLP…ILSN, STTA…ADKF, and INSV…SGIL. Hemolysin-type calcium-binding repeat units follow at residues 730-747, 748-765, 766-783, 784-801, 812-829, and 830-847; these read FGSR…DDEI, YGND…NDVI, HGGD…NDRL, IGGK…DDEL, LGGA…TNLF, and DGGV…KDIY.

Belongs to the RTX prokaryotic toxin (TC 1.C.11) family. Post-translationally, palmitoylated by ApxIC. The toxin only becomes active when modified.

The protein localises to the secreted. Its subcellular location is the host cell membrane. In terms of biological role, one of the virulence factors of A.pleuropneumoniae, which has a strong hemolytic activity and is cytotoxic for alveolar macrophages and neutrophils. In Actinobacillus pleuropneumoniae (Haemophilus pleuropneumoniae), this protein is RTX-I toxin determinant A from serotypes 5/10 (apxIA).